The primary structure comprises 138 residues: Large ribosomal subunit protein uL16c (138 aa).

It belongs to the universal ribosomal protein uL16 family. Part of the 50S ribosomal subunit.

It localises to the plastid. Its subcellular location is the chloroplast. The sequence is that of Large ribosomal subunit protein uL16c from Physcomitrium patens (Spreading-leaved earth moss).